A 401-amino-acid chain; its full sequence is Probable 2,3-bisphosphoglycerate-independent phosphoglycerate mutase (401 aa).

The protein belongs to the BPG-independent phosphoglycerate mutase family. A-PGAM subfamily.

The catalysed reaction is (2R)-2-phosphoglycerate = (2R)-3-phosphoglycerate. It functions in the pathway carbohydrate degradation; glycolysis; pyruvate from D-glyceraldehyde 3-phosphate: step 3/5. Its function is as follows. Catalyzes the interconversion of 2-phosphoglycerate and 3-phosphoglycerate. This is Probable 2,3-bisphosphoglycerate-independent phosphoglycerate mutase from Thermotoga neapolitana (strain ATCC 49049 / DSM 4359 / NBRC 107923 / NS-E).